The chain runs to 190 residues: Holliday junction branch migration complex subunit RuvA (190 aa).

The tract at residues Met1 to Ala64 is domain I. The tract at residues Thr65–Gly137 is domain II. The interval Gly137–Ser141 is flexible linker. Residues Val142–Lys190 form a domain III region.

The protein belongs to the RuvA family. As to quaternary structure, homotetramer. Forms an RuvA(8)-RuvB(12)-Holliday junction (HJ) complex. HJ DNA is sandwiched between 2 RuvA tetramers; dsDNA enters through RuvA and exits via RuvB. An RuvB hexamer assembles on each DNA strand where it exits the tetramer. Each RuvB hexamer is contacted by two RuvA subunits (via domain III) on 2 adjacent RuvB subunits; this complex drives branch migration. In the full resolvosome a probable DNA-RuvA(4)-RuvB(12)-RuvC(2) complex forms which resolves the HJ.

It is found in the cytoplasm. In terms of biological role, the RuvA-RuvB-RuvC complex processes Holliday junction (HJ) DNA during genetic recombination and DNA repair, while the RuvA-RuvB complex plays an important role in the rescue of blocked DNA replication forks via replication fork reversal (RFR). RuvA specifically binds to HJ cruciform DNA, conferring on it an open structure. The RuvB hexamer acts as an ATP-dependent pump, pulling dsDNA into and through the RuvAB complex. HJ branch migration allows RuvC to scan DNA until it finds its consensus sequence, where it cleaves and resolves the cruciform DNA. This chain is Holliday junction branch migration complex subunit RuvA, found in Albidiferax ferrireducens (strain ATCC BAA-621 / DSM 15236 / T118) (Rhodoferax ferrireducens).